The chain runs to 177 residues: ATP synthase subunit delta (177 aa).

The protein belongs to the ATPase delta chain family. F-type ATPases have 2 components, F(1) - the catalytic core - and F(0) - the membrane proton channel. F(1) has five subunits: alpha(3), beta(3), gamma(1), delta(1), epsilon(1). F(0) has three main subunits: a(1), b(2) and c(10-14). The alpha and beta chains form an alternating ring which encloses part of the gamma chain. F(1) is attached to F(0) by a central stalk formed by the gamma and epsilon chains, while a peripheral stalk is formed by the delta and b chains.

It localises to the cell inner membrane. Its function is as follows. F(1)F(0) ATP synthase produces ATP from ADP in the presence of a proton or sodium gradient. F-type ATPases consist of two structural domains, F(1) containing the extramembraneous catalytic core and F(0) containing the membrane proton channel, linked together by a central stalk and a peripheral stalk. During catalysis, ATP synthesis in the catalytic domain of F(1) is coupled via a rotary mechanism of the central stalk subunits to proton translocation. In terms of biological role, this protein is part of the stalk that links CF(0) to CF(1). It either transmits conformational changes from CF(0) to CF(1) or is implicated in proton conduction. This Photorhabdus laumondii subsp. laumondii (strain DSM 15139 / CIP 105565 / TT01) (Photorhabdus luminescens subsp. laumondii) protein is ATP synthase subunit delta.